The primary structure comprises 144 residues: Nucleoside diphosphate kinase (144 aa).

Residues K11, F59, R87, T93, R104, and N114 each contribute to the ATP site. H117 (pros-phosphohistidine intermediate) is an active-site residue.

Belongs to the NDK family. In terms of assembly, homotetramer. It depends on Mg(2+) as a cofactor.

It is found in the cytoplasm. The enzyme catalyses a 2'-deoxyribonucleoside 5'-diphosphate + ATP = a 2'-deoxyribonucleoside 5'-triphosphate + ADP. It catalyses the reaction a ribonucleoside 5'-diphosphate + ATP = a ribonucleoside 5'-triphosphate + ADP. Functionally, major role in the synthesis of nucleoside triphosphates other than ATP. The ATP gamma phosphate is transferred to the NDP beta phosphate via a ping-pong mechanism, using a phosphorylated active-site intermediate. In Aliivibrio fischeri (strain MJ11) (Vibrio fischeri), this protein is Nucleoside diphosphate kinase.